A 331-amino-acid polypeptide reads, in one-letter code: Ketol-acid reductoisomerase (NADP(+)) (331 aa).

The 181-residue stretch at 2–182 (ARMYYDADAQ…GGTRAGILET (181 aa)) folds into the KARI N-terminal Rossmann domain. Residues 25 to 28 (YGSQ), serine 51, serine 53, and 83 to 86 (DEVQ) contribute to the NADP(+) site. Histidine 108 is a catalytic residue. Glycine 134 lines the NADP(+) pocket. Residues 183–328 (TFREETETDL…QELRSMFSWL (146 aa)) form the KARI C-terminal knotted domain. Residues aspartate 191, glutamate 195, glutamate 227, and glutamate 231 each contribute to the Mg(2+) site. Serine 252 contributes to the substrate binding site.

This sequence belongs to the ketol-acid reductoisomerase family. Mg(2+) serves as cofactor.

The catalysed reaction is (2R)-2,3-dihydroxy-3-methylbutanoate + NADP(+) = (2S)-2-acetolactate + NADPH + H(+). It catalyses the reaction (2R,3R)-2,3-dihydroxy-3-methylpentanoate + NADP(+) = (S)-2-ethyl-2-hydroxy-3-oxobutanoate + NADPH + H(+). It functions in the pathway amino-acid biosynthesis; L-isoleucine biosynthesis; L-isoleucine from 2-oxobutanoate: step 2/4. The protein operates within amino-acid biosynthesis; L-valine biosynthesis; L-valine from pyruvate: step 2/4. Functionally, involved in the biosynthesis of branched-chain amino acids (BCAA). Catalyzes an alkyl-migration followed by a ketol-acid reduction of (S)-2-acetolactate (S2AL) to yield (R)-2,3-dihydroxy-isovalerate. In the isomerase reaction, S2AL is rearranged via a Mg-dependent methyl migration to produce 3-hydroxy-3-methyl-2-ketobutyrate (HMKB). In the reductase reaction, this 2-ketoacid undergoes a metal-dependent reduction by NADPH to yield (R)-2,3-dihydroxy-isovalerate. The protein is Ketol-acid reductoisomerase (NADP(+)) of Thermosynechococcus vestitus (strain NIES-2133 / IAM M-273 / BP-1).